Consider the following 295-residue polypeptide: MYTGRFAPSPTGLLHIGSLLTAAASYADARSNGGKWLVRMEDLDPPREMPGAASHILHTLEAFGFEWDGEVAYQSRRYALYEETLCRLKTAGLVYPCHCSRKDWQAAARRGADGFVYNGRCRHPGQRPAPQGKQPAWRIRVPDRDIGFSDGIVGGYAQNLARDIGDFVLLRADGYWAYQLAVVADDAEQGVTHIVRGQDLLVSTPRQIYLQQCLGVPTPQYAHLPLLTNAQGQKWSKQTLAPALDLNRREQLLRQVFRYLNLPEAPETDRPAELLDWAVAHWDMDKVPKHAVTPP.

Residues 5 to 9 (RFAPS) and glutamate 41 contribute to the L-glutamate site. Residues 8–18 (PSPTGLLHIGS) carry the 'HIGH' region motif. Zn(2+) is bound by residues cysteine 97, cysteine 99, tyrosine 117, and cysteine 121. Tyrosine 178 and arginine 196 together coordinate L-glutamate. The 'KMSKS' region signature appears at 234–238 (KWSKQ). Residue lysine 237 coordinates ATP.

This sequence belongs to the class-I aminoacyl-tRNA synthetase family. GluQ subfamily. Zn(2+) serves as cofactor.

Its function is as follows. Catalyzes the tRNA-independent activation of glutamate in presence of ATP and the subsequent transfer of glutamate onto a tRNA(Asp). Glutamate is transferred on the 2-amino-5-(4,5-dihydroxy-2-cyclopenten-1-yl) moiety of the queuosine in the wobble position of the QUC anticodon. In Neisseria meningitidis serogroup C (strain 053442), this protein is Glutamyl-Q tRNA(Asp) synthetase.